The primary structure comprises 65 residues: Sodium channel alpha-toxin Acra4 (65 aa).

The 62-residue stretch at 2-63 (RDGYIVDDKN…PIKDPSYKCH (62 aa)) folds into the LCN-type CS-alpha/beta domain. Disulfide bonds link Cys-12–Cys-62, Cys-16–Cys-34, Cys-20–Cys-44, and Cys-24–Cys-46. Position 65 (Arg-65) is a propeptide, removed by a carboxypeptidase.

The protein belongs to the long (4 C-C) scorpion toxin superfamily. Sodium channel inhibitor family. Alpha subfamily. In terms of tissue distribution, expressed by the venom gland.

Its subcellular location is the secreted. Alpha toxins bind voltage-independently at site-3 of sodium channels (Nav) and inhibit the inactivation of the activated channels, thereby blocking neuronal transmission. Electrophysiological studies of this were performed using sodium-channels expressed in F11 cell culture, by patch-clamp recordings. Affinity of this toxin toward sodium channels in F11 cell line is in the order of 1 uM concentration. This chain is Sodium channel alpha-toxin Acra4, found in Androctonus crassicauda (Arabian fat-tailed scorpion).